Reading from the N-terminus, the 218-residue chain is N-(5'-phosphoribosyl)anthranilate isomerase (218 aa).

This sequence belongs to the TrpF family.

It catalyses the reaction N-(5-phospho-beta-D-ribosyl)anthranilate = 1-(2-carboxyphenylamino)-1-deoxy-D-ribulose 5-phosphate. Its pathway is amino-acid biosynthesis; L-tryptophan biosynthesis; L-tryptophan from chorismate: step 3/5. In Rhodopseudomonas palustris (strain BisB18), this protein is N-(5'-phosphoribosyl)anthranilate isomerase.